Consider the following 125-residue polypeptide: Large ribosomal subunit protein bL12 (125 aa).

This sequence belongs to the bacterial ribosomal protein bL12 family. In terms of assembly, homodimer. Part of the ribosomal stalk of the 50S ribosomal subunit. Forms a multimeric L10(L12)X complex, where L10 forms an elongated spine to which 2 to 4 L12 dimers bind in a sequential fashion. Binds GTP-bound translation factors.

Forms part of the ribosomal stalk which helps the ribosome interact with GTP-bound translation factors. Is thus essential for accurate translation. This chain is Large ribosomal subunit protein bL12, found in Parabacteroides distasonis (strain ATCC 8503 / DSM 20701 / CIP 104284 / JCM 5825 / NCTC 11152).